The sequence spans 289 residues: Glucosamine-6-phosphate deaminase 1 (289 aa).

Residue Lys64 is modified to N6-acetyllysine. The active-site Proton acceptor; for enolization step is the Asp72. Asp141 serves as the catalytic For ring-opening step. His143 functions as the Proton acceptor; for ring-opening step in the catalytic mechanism. The active-site For ring-opening step is the Glu148. At Thr161 the chain carries Phosphothreonine.

Belongs to the glucosamine/galactosamine-6-phosphate isomerase family. In terms of assembly, homohexamer.

Its subcellular location is the cytoplasm. The catalysed reaction is alpha-D-glucosamine 6-phosphate + H2O = beta-D-fructose 6-phosphate + NH4(+). It functions in the pathway nucleotide-sugar biosynthesis; UDP-N-acetyl-alpha-D-glucosamine biosynthesis; alpha-D-glucosamine 6-phosphate from D-fructose 6-phosphate: step 1/1. Allosterically activated by N-acetylglucosamine-6-phosphate (GlcNAc6P). Its function is as follows. Catalyzes the reversible conversion of alpha-D-glucosamine 6-phosphate (GlcN-6P) into beta-D-fructose 6-phosphate (Fru-6P) and ammonium ion, a regulatory reaction step in de novo uridine diphosphate-N-acetyl-alpha-D-glucosamine (UDP-GlcNAc) biosynthesis via hexosamine pathway. Deamination is coupled to aldo-keto isomerization mediating the metabolic flux from UDP-GlcNAc toward Fru-6P. At high ammonium level can drive amination and isomerization of Fru-6P toward hexosamines and UDP-GlcNAc synthesis. Has a role in fine tuning the metabolic fluctuations of cytosolic UDP-GlcNAc and their effects on hyaluronan synthesis that occur during tissue remodeling. Seems to trigger calcium oscillations in mammalian eggs. These oscillations serve as the essential trigger for egg activation and early development of the embryo. This chain is Glucosamine-6-phosphate deaminase 1, found in Pongo abelii (Sumatran orangutan).